The chain runs to 619 residues: 2-isopropylmalate synthase (619 aa).

The Pyruvate carboxyltransferase domain occupies 61–336; it reads PRWLSTDLRD…SPNLDFSDLT (276 aa). The a divalent metal cation site is built by aspartate 70, histidine 275, histidine 277, and asparagine 311.

The protein belongs to the alpha-IPM synthase/homocitrate synthase family. LeuA type 2 subfamily. Homodimer. The cofactor is a divalent metal cation.

The protein localises to the cytoplasm. It localises to the mitochondrion. The catalysed reaction is 3-methyl-2-oxobutanoate + acetyl-CoA + H2O = (2S)-2-isopropylmalate + CoA + H(+). It participates in amino-acid biosynthesis; L-leucine biosynthesis; L-leucine from 3-methyl-2-oxobutanoate: step 1/4. Its function is as follows. Catalyzes the condensation of the acetyl group of acetyl-CoA with 3-methyl-2-oxobutanoate (2-oxoisovalerate) to form 3-carboxy-3-hydroxy-4-methylpentanoate (2-isopropylmalate). This chain is 2-isopropylmalate synthase (LEU4), found in Saccharomyces cerevisiae (strain ATCC 204508 / S288c) (Baker's yeast).